The primary structure comprises 77 residues: U14-theraphotoxin-Cg1a 2 (77 aa).

Positions M1–A21 are cleaved as a signal peptide. Residues S22–R49 constitute a propeptide that is removed on maturation. Intrachain disulfides connect C50-C64, C57-C69, and C63-C75. Residue K77 is modified to Lysine amide.

This sequence belongs to the neurotoxin 10 (Hwtx-1) family. 65 (Jztx-21) subfamily. As to expression, expressed by the venom gland.

Its subcellular location is the secreted. Its function is as follows. Probable ion channel inhibitor. This chain is U14-theraphotoxin-Cg1a 2, found in Chilobrachys guangxiensis (Chinese earth tiger tarantula).